The sequence spans 299 residues: Protease HtpX homolog (299 aa).

A run of 2 helical transmembrane segments spans residues 16–36 (VMAA…YVFF) and 38–58 (SAIA…VLMI). Residue histidine 144 participates in Zn(2+) binding. The active site involves glutamate 145. Histidine 148 contacts Zn(2+). 2 helical membrane-spanning segments follow: residues 159-179 (IALA…NAFW) and 198-218 (VLLM…ASLV). Glutamate 227 lines the Zn(2+) pocket.

This sequence belongs to the peptidase M48B family. Requires Zn(2+) as cofactor.

It is found in the cell membrane. This is Protease HtpX homolog from Lactiplantibacillus plantarum (strain ATCC BAA-793 / NCIMB 8826 / WCFS1) (Lactobacillus plantarum).